A 291-amino-acid polypeptide reads, in one-letter code: Heterogeneous nuclear ribonucleoprotein D-like-B (291 aa).

RRM domains lie at 34-116 (SKMF…QGKE) and 119-196 (KKVF…AAQP). Positions 196–226 (PKEVYRQQQQKQQKGGRGGTRGRGRGQGYSN) are disordered. The span at 210–222 (GGRGGTRGRGRGQ) shows a compositional bias: gly residues.

The protein resides in the nucleus. Its subcellular location is the cytoplasm. Acts as a transcriptional regulator. Binds DNA and RNA. This is Heterogeneous nuclear ribonucleoprotein D-like-B (hnrnpdl-b) from Xenopus laevis (African clawed frog).